The sequence spans 204 residues: Proteasome subunit beta type-3-A (204 aa).

This sequence belongs to the peptidase T1B family. In terms of assembly, component of the 20S core complex of the 26S proteasome. The 26S proteasome is composed of a core protease (CP), known as the 20S proteasome, capped at one or both ends by the 19S regulatory particle (RP/PA700). The 20S proteasome core is composed of 28 subunits that are arranged in four stacked rings, resulting in a barrel-shaped structure. The two end rings are each formed by seven alpha subunits, and the two central rings are each formed by seven beta subunits. The catalytic chamber with the active sites is on the inside of the barrel.

The protein localises to the cytoplasm. The protein resides in the nucleus. Non-catalytic component of the proteasome, a multicatalytic proteinase complex which is characterized by its ability to cleave peptides with Arg, Phe, Tyr, Leu, and Glu adjacent to the leaving group at neutral or slightly basic pH. The proteasome has an ATP-dependent proteolytic activity. The protein is Proteasome subunit beta type-3-A (PBC1) of Arabidopsis thaliana (Mouse-ear cress).